The chain runs to 331 residues: Spondin-2 (331 aa).

A signal peptide spans 1–26 (MENPSPAAALGKALCALLLATLGAAG). The Spondin domain maps to 31 to 221 (GESICSARAL…EITSSSPSHP (191 aa)). Cysteine 35 and cysteine 171 are joined by a disulfide. Glutamate 141 contributes to the a divalent metal cation binding site. Aspartate 160, aspartate 188, and aspartate 192 together coordinate Ca(2+). In terms of domain architecture, TSP type-1 spans 277–331 (DCEVSLWSSWGLCGGHCGRLGTKSRTRYVRVQPANNGSPCPELEEEAECVPDNCV). Tryptophan 283 carries a C-linked (Man) tryptophan glycan.

As to quaternary structure, monomer. Interacts with integrin. Expressed in normal lung tissue but not in lung carcinoma cell lines.

It is found in the secreted. It localises to the extracellular space. The protein resides in the extracellular matrix. In terms of biological role, cell adhesion protein that promotes adhesion and outgrowth of hippocampal embryonic neurons. Binds directly to bacteria and their components and functions as an opsonin for macrophage phagocytosis of bacteria. Essential in the initiation of the innate immune response and represents a unique pattern-recognition molecule in the ECM for microbial pathogens. Binds bacterial lipopolysaccharide (LPS). The protein is Spondin-2 (SPON2) of Homo sapiens (Human).